The sequence spans 1057 residues: Carbamoyl phosphate synthase large chain (1057 aa).

Residues 1–401 (MPKRDDIQTI…SLLKAIRSLE (401 aa)) form a carboxyphosphate synthetic domain region. Positions 129, 169, 175, 176, 208, 210, 215, 241, 242, 243, 284, and 298 each coordinate ATP. Positions 133 to 327 (RSLMNDLNVP…IAKLAAKIAV (195 aa)) constitute an ATP-grasp 1 domain. Positions 284, 298, and 300 each coordinate Mg(2+). The Mn(2+) site is built by Gln284, Glu298, and Asn300. The interval 402-546 (YGVHHLGLPN…YGTYETENES (145 aa)) is oligomerization domain. Residues 547–929 (IVTDKEKILV…ALYKGLTGSG (383 aa)) form a carbamoyl phosphate synthetic domain region. In terms of domain architecture, ATP-grasp 2 spans 671–861 (EALLHTIDVP…MAQLAMQAIM (191 aa)). 10 residues coordinate ATP: Arg707, Arg746, Leu748, Glu752, Gly777, Val778, His779, Ser780, Gln820, and Glu832. Gln820, Glu832, and Asn834 together coordinate Mg(2+). Positions 820, 832, and 834 each coordinate Mn(2+). The 128-residue stretch at 930 to 1057 (VEVKDHGTVL…ESMTFSMRTM (128 aa)) folds into the MGS-like domain. The tract at residues 930-1057 (VEVKDHGTVL…ESMTFSMRTM (128 aa)) is allosteric domain.

It belongs to the CarB family. As to quaternary structure, composed of two chains; the small (or glutamine) chain promotes the hydrolysis of glutamine to ammonia, which is used by the large (or ammonia) chain to synthesize carbamoyl phosphate. Tetramer of heterodimers (alpha,beta)4. Mg(2+) serves as cofactor. The cofactor is Mn(2+).

The enzyme catalyses hydrogencarbonate + L-glutamine + 2 ATP + H2O = carbamoyl phosphate + L-glutamate + 2 ADP + phosphate + 2 H(+). The catalysed reaction is hydrogencarbonate + NH4(+) + 2 ATP = carbamoyl phosphate + 2 ADP + phosphate + 2 H(+). It functions in the pathway amino-acid biosynthesis; L-arginine biosynthesis; carbamoyl phosphate from bicarbonate: step 1/1. The protein operates within pyrimidine metabolism; UMP biosynthesis via de novo pathway; (S)-dihydroorotate from bicarbonate: step 1/3. Its function is as follows. Large subunit of the glutamine-dependent carbamoyl phosphate synthetase (CPSase). CPSase catalyzes the formation of carbamoyl phosphate from the ammonia moiety of glutamine, carbonate, and phosphate donated by ATP, constituting the first step of 2 biosynthetic pathways, one leading to arginine and/or urea and the other to pyrimidine nucleotides. The large subunit (synthetase) binds the substrates ammonia (free or transferred from glutamine from the small subunit), hydrogencarbonate and ATP and carries out an ATP-coupled ligase reaction, activating hydrogencarbonate by forming carboxy phosphate which reacts with ammonia to form carbamoyl phosphate. The chain is Carbamoyl phosphate synthase large chain from Staphylococcus haemolyticus (strain JCSC1435).